Reading from the N-terminus, the 255-residue chain is 5'-nucleotidase SurE (255 aa).

A divalent metal cation contacts are provided by aspartate 8, aspartate 9, serine 40, and asparagine 95.

The protein belongs to the SurE nucleotidase family. The cofactor is a divalent metal cation.

It is found in the cytoplasm. It catalyses the reaction a ribonucleoside 5'-phosphate + H2O = a ribonucleoside + phosphate. Nucleotidase that shows phosphatase activity on nucleoside 5'-monophosphates. The sequence is that of 5'-nucleotidase SurE from Solidesulfovibrio magneticus (strain ATCC 700980 / DSM 13731 / RS-1) (Desulfovibrio magneticus).